A 166-amino-acid polypeptide reads, in one-letter code: MLPAYLPNNFAALTGGGMPIDMGRNWTDGRRILGDGKTIRGFVGGVTAGILIGAVQMYAEISGLVPWFPPHTLTAVILLAIGSLLGDMVKSFFKRRQGIDRGGEWFLVDQLDFVVGALLLTLLFDPIWMLNTMTIPLLIVILVLTPLLHRTVNIIGYKLGLKKVPW.

The next 4 membrane-spanning stretches (helical) occupy residues 39–59 (IRGF…QMYA), 61–81 (ISGL…LLAI), 104–124 (EWFL…TLLF), and 127–147 (IWML…LTPL).

It belongs to the CDP-archaeol synthase family. The cofactor is Mg(2+).

It localises to the cell membrane. The catalysed reaction is 2,3-bis-O-(geranylgeranyl)-sn-glycerol 1-phosphate + CTP + H(+) = CDP-2,3-bis-O-(geranylgeranyl)-sn-glycerol + diphosphate. Its pathway is membrane lipid metabolism; glycerophospholipid metabolism. Its function is as follows. Catalyzes the formation of CDP-2,3-bis-(O-geranylgeranyl)-sn-glycerol (CDP-archaeol) from 2,3-bis-(O-geranylgeranyl)-sn-glycerol 1-phosphate (DGGGP) and CTP. This reaction is the third ether-bond-formation step in the biosynthesis of archaeal membrane lipids. This chain is CDP-archaeol synthase, found in Methanospirillum hungatei JF-1 (strain ATCC 27890 / DSM 864 / NBRC 100397 / JF-1).